A 322-amino-acid chain; its full sequence is Putative T-box protein 11 (322 aa).

Residues 16–185 (LWRSCHEYDN…NNPYSTGSRK (170 aa)) constitute a DNA-binding region (T-box). Over residues 171-182 (TLKTNNNPYSTG) the composition is skewed to polar residues. The interval 171 to 214 (TLKTNNNPYSTGSRKDRRRERQSPVYSEGTSSEKSISPPPAKKI) is disordered.

The protein resides in the nucleus. The sequence is that of Putative T-box protein 11 (tbx-11) from Caenorhabditis elegans.